The primary structure comprises 102 residues: Cytochrome b (102 aa).

3 helical membrane passes run 1 to 21 (FGSL…FLAM), 45 to 66 (WLIR…YMHI), and 81 to 101 (WNIG…GYVF). 2 residues coordinate heme b: His-51 and His-65.

This sequence belongs to the cytochrome b family. The cytochrome bc1 complex contains 3 respiratory subunits (MT-CYB, CYC1 and UQCRFS1), 2 core proteins (UQCRC1 and UQCRC2) and probably 6 low-molecular weight proteins. Requires heme b as cofactor.

It is found in the mitochondrion inner membrane. Its function is as follows. Component of the ubiquinol-cytochrome c reductase complex (complex III or cytochrome b-c1 complex) that is part of the mitochondrial respiratory chain. The b-c1 complex mediates electron transfer from ubiquinol to cytochrome c. Contributes to the generation of a proton gradient across the mitochondrial membrane that is then used for ATP synthesis. This chain is Cytochrome b (mt-cyb), found in Plethodon yonahlossee (Yonahlossee salamander).